We begin with the raw amino-acid sequence, 286 residues long: Bifunctional protein FolD (286 aa).

Residues 170 to 172 (GHS) and Ile236 each bind NADP(+).

It belongs to the tetrahydrofolate dehydrogenase/cyclohydrolase family. Homodimer.

It catalyses the reaction (6R)-5,10-methylene-5,6,7,8-tetrahydrofolate + NADP(+) = (6R)-5,10-methenyltetrahydrofolate + NADPH. The enzyme catalyses (6R)-5,10-methenyltetrahydrofolate + H2O = (6R)-10-formyltetrahydrofolate + H(+). It functions in the pathway one-carbon metabolism; tetrahydrofolate interconversion. Its function is as follows. Catalyzes the oxidation of 5,10-methylenetetrahydrofolate to 5,10-methenyltetrahydrofolate and then the hydrolysis of 5,10-methenyltetrahydrofolate to 10-formyltetrahydrofolate. This is Bifunctional protein FolD from Methanococcoides burtonii (strain DSM 6242 / NBRC 107633 / OCM 468 / ACE-M).